Here is a 197-residue protein sequence, read N- to C-terminus: Guanylate kinase (197 aa).

Ser-2 bears the N-acetylserine mark. The region spanning 4-186 is the Guanylate kinase-like domain; the sequence is PRPVVLSGPS…AYAELKEALS (183 aa). 14 to 19 lines the ATP pocket; it reads GAGKST. 37–51 contacts substrate; sequence SHTTRNPRPGEENGK. Residues Arg-44, Arg-137, and Arg-148 contribute to the active site. Arg-137 contributes to the ATP binding site. 171–172 contributes to the ATP binding site; the sequence is ND.

Belongs to the guanylate kinase family. Monomer. Interacts with RD3. Widely expressed.

It localises to the photoreceptor inner segment. Its subcellular location is the cytoplasm. The protein localises to the cytosol. The protein resides in the mitochondrion. It carries out the reaction GMP + ATP = GDP + ADP. With respect to regulation, up-regulated by RD3. Functionally, catalyzes the phosphorylation of GMP to GDP. Essential enzyme for recycling GMP and indirectly, cyclic GMP (cGMP). Involved in the cGMP metabolism in photoreceptors. It may also have a role in the survival and growth progression of some tumors. In addition to its physiological role, GUK1 is essential for converting prodrugs used for the treatment of cancers and viral infections into their pharmacologically active metabolites, most notably acyclovir, ganciclovir, and 6-thioguanine and its closely related analog 6-mercaptopurine. The protein is Guanylate kinase of Homo sapiens (Human).